Consider the following 91-residue polypeptide: Cell division protein FtsB (91 aa).

Residues 1–3 (MKW) are Cytoplasmic-facing. Residues 4–21 (LVAVLVVFVAMFQYRLWV) traverse the membrane as a helical segment. Over 22 to 91 (GEGSIADVVR…ETFFMIIDDQ (70 aa)) the chain is Periplasmic. A coiled-coil region spans residues 23–63 (EGSIADVVRLEREIARQEADNERLRERNKQLAAEVDALKTG).

It belongs to the FtsB family. In terms of assembly, part of a complex composed of FtsB, FtsL and FtsQ.

It localises to the cell inner membrane. Functionally, essential cell division protein. May link together the upstream cell division proteins, which are predominantly cytoplasmic, with the downstream cell division proteins, which are predominantly periplasmic. This Teredinibacter turnerae (strain ATCC 39867 / T7901) protein is Cell division protein FtsB.